A 121-amino-acid polypeptide reads, in one-letter code: Holo-[acyl-carrier-protein] synthase (121 aa).

Positions 8 and 55 each coordinate Mg(2+).

This sequence belongs to the P-Pant transferase superfamily. AcpS family. It depends on Mg(2+) as a cofactor.

Its subcellular location is the cytoplasm. It carries out the reaction apo-[ACP] + CoA = holo-[ACP] + adenosine 3',5'-bisphosphate + H(+). Functionally, transfers the 4'-phosphopantetheine moiety from coenzyme A to a Ser of acyl-carrier-protein. This Caldicellulosiruptor bescii (strain ATCC BAA-1888 / DSM 6725 / KCTC 15123 / Z-1320) (Anaerocellum thermophilum) protein is Holo-[acyl-carrier-protein] synthase.